Consider the following 224-residue polypeptide: Orotidine 5'-phosphate decarboxylase (224 aa).

Substrate is bound by residues Asp-10, Lys-32, 59–68 (DLKLHDIPNT), Thr-115, Arg-175, Gln-184, Gly-204, and Arg-205. The active-site Proton donor is Lys-61.

It belongs to the OMP decarboxylase family. Type 1 subfamily. As to quaternary structure, homodimer.

The enzyme catalyses orotidine 5'-phosphate + H(+) = UMP + CO2. It functions in the pathway pyrimidine metabolism; UMP biosynthesis via de novo pathway; UMP from orotate: step 2/2. Its function is as follows. Catalyzes the decarboxylation of orotidine 5'-monophosphate (OMP) to uridine 5'-monophosphate (UMP). This is Orotidine 5'-phosphate decarboxylase from Erythrobacter litoralis (strain HTCC2594).